Here is a 36-residue protein sequence, read N- to C-terminus: Neurotoxin PRTx26An0C3 (36 aa).

Intrachain disulfides connect C3–C17, C10–C22, and C16–C34.

In terms of tissue distribution, expressed by the venom gland.

Its subcellular location is the secreted. Neurotoxin. Causes spastic paralysis and death in mice. Moderate inhibitor of L-type calcium channels (Cav1/CACNA1). The sequence is that of Neurotoxin PRTx26An0C3 from Phoneutria nigriventer (Brazilian armed spider).